A 429-amino-acid polypeptide reads, in one-letter code: Cytochrome c biogenesis protein CcsB (429 aa).

Helical transmembrane passes span 14 to 34 (LKVA…GTAL), 72 to 92 (SFWF…CSWK), and 162 to 182 (VGPP…TYGV).

It belongs to the Ccs1/CcsB family. In terms of assembly, may interact with CcsA.

The protein localises to the cellular thylakoid membrane. In terms of biological role, required during biogenesis of c-type cytochromes (cytochrome c6 and cytochrome f) at the step of heme attachment. This is Cytochrome c biogenesis protein CcsB from Prochlorococcus marinus (strain SARG / CCMP1375 / SS120).